Consider the following 61-residue polypeptide: Large ribosomal subunit protein uL29 (61 aa).

The protein belongs to the universal ribosomal protein uL29 family.

The chain is Large ribosomal subunit protein uL29 from Campylobacter jejuni subsp. jejuni serotype O:6 (strain 81116 / NCTC 11828).